The following is a 250-amino-acid chain: Probable transcriptional regulatory protein Rxyl_1318 (250 aa).

This sequence belongs to the TACO1 family.

The protein resides in the cytoplasm. This Rubrobacter xylanophilus (strain DSM 9941 / JCM 11954 / NBRC 16129 / PRD-1) protein is Probable transcriptional regulatory protein Rxyl_1318.